We begin with the raw amino-acid sequence, 447 residues long: Serine/threonine-protein phosphatase 2A 55 kDa regulatory subunit B gamma isoform (447 aa).

7 WD repeats span residues 22-61 (TPADIISTVEFNHTGELLATGDKGGRVVIFQREPESKNAP), 87-128 (EIEE…KRPE), 171-209 (GHTYHINSISVNSDCETYMSADDLRINLWHLAITDRSFN), 220-260 (DLTE…LCDK), 279-317 (EIISSVSDVKFSHSGRYMLTRDYLTVKVWDLNMEARPIE), 334-375 (ENDC…DVTL), and 410-446 (DFTKKILHTAWHPAENIIAIAATNNLYIFQDKVNSDM).

This sequence belongs to the phosphatase 2A regulatory subunit B family. As to quaternary structure, PP2A consists of a common heterodimeric core enzyme, composed of a 36 kDa catalytic subunit (subunit C) and a 65 kDa constant regulatory subunit (PR65 or subunit A), that associates with a variety of regulatory subunits. Proteins that associate with the core dimer include three families of regulatory subunits B (the R2/B/PR55/B55, R3/B''/PR72/PR130/PR59 and R5/B'/B56 families), the 48 kDa variable regulatory subunit, viral proteins, and cell signaling molecules. Interacts with IER5.

In terms of biological role, the B regulatory subunit might modulate substrate selectivity and catalytic activity, and might also direct the localization of the catalytic enzyme to a particular subcellular compartment. This is Serine/threonine-protein phosphatase 2A 55 kDa regulatory subunit B gamma isoform (PPP2R2C) from Macaca fascicularis (Crab-eating macaque).